The following is a 381-amino-acid chain: Succinyl-diaminopimelate desuccinylase (381 aa).

His68 serves as a coordination point for Zn(2+). Residue Asp70 is part of the active site. Asp101 is a binding site for Zn(2+). Glu135 serves as the catalytic Proton acceptor. Zn(2+) contacts are provided by Glu136, Glu164, and His350.

The protein belongs to the peptidase M20A family. DapE subfamily. Homodimer. Zn(2+) serves as cofactor. Co(2+) is required as a cofactor.

The catalysed reaction is N-succinyl-(2S,6S)-2,6-diaminopimelate + H2O = (2S,6S)-2,6-diaminopimelate + succinate. It functions in the pathway amino-acid biosynthesis; L-lysine biosynthesis via DAP pathway; LL-2,6-diaminopimelate from (S)-tetrahydrodipicolinate (succinylase route): step 3/3. Catalyzes the hydrolysis of N-succinyl-L,L-diaminopimelic acid (SDAP), forming succinate and LL-2,6-diaminopimelate (DAP), an intermediate involved in the bacterial biosynthesis of lysine and meso-diaminopimelic acid, an essential component of bacterial cell walls. In Neisseria meningitidis serogroup C / serotype 2a (strain ATCC 700532 / DSM 15464 / FAM18), this protein is Succinyl-diaminopimelate desuccinylase.